A 635-amino-acid polypeptide reads, in one-letter code: Extracellular metalloproteinase MEP (635 aa).

The N-terminal stretch at Met1 to Ala19 is a signal peptide. A propeptide spanning residues His20–His242 is cleaved from the precursor. Zn(2+) is bound at residue His428. The active site involves Glu429. His432 is a Zn(2+) binding site. An N-linked (GlcNAc...) asparagine glycan is attached at Asn473.

It belongs to the peptidase M36 family. Requires Zn(2+) as cofactor.

It localises to the secreted. Secreted metalloproteinase that allows assimilation of proteinaceous substrates. In Pyricularia oryzae (strain 70-15 / ATCC MYA-4617 / FGSC 8958) (Rice blast fungus), this protein is Extracellular metalloproteinase MEP (MEP).